A 620-amino-acid chain; its full sequence is MALLQIAEPGLSPQPHQRRLAVGIDLGTTNSLVAAVRSGLSEPLADAEGQVILPSAVRYHADRVEVGQAAKAAASQDPFNTVLSVKRLMGRGLSDVKQLGEQLPYRFVGGESHMPFIDTVQGAKSPVEVSADILKVLRQRAEAALGGELVGAVITVPAYFDDSQRQATKDAAKLAGLNVLRLLNEPTAAAVAYGLDQKAEGVIAIYDLGGGTFDISILRLTGGVFEVLATGGDTALGGDDFDHAIASWIVADAGLSADLDPSAQRSLLQAACSAKEALTDAEFVEVTHGEWRGTLTRDALNALIEPMIARSLKACRRAVRDTGIELEEVEAVVMVGGSTRVPRVREAVAELFGRQPLTQIDPDQVVAIGAAIQADTLAGNKRDGGELLLLDVIPLSLGLETMGGLMEKVIPRNTTIPVARGQEFTTYKDGQTAMKIHVLQGERELVSDCRSLARFELRGIPPMVAGAAKIRVTFQVDADGLLSVSAREMGSGIESSIQVKPSYGLTDDEVTRMLKDSFEYAGDDKVARVLREHQVDAERLLEAVQGALDADGERLLDEEERLVINLQMDELRELMQGTDGYAIEQQTKRLSQVTDAFAARRLDSTVKAALAGRNLNEIEE.

This sequence belongs to the heat shock protein 70 family.

Functionally, chaperone involved in the maturation of iron-sulfur cluster-containing proteins. Has a low intrinsic ATPase activity which is markedly stimulated by HscB. The sequence is that of Chaperone protein HscA homolog from Pseudomonas syringae pv. tomato (strain ATCC BAA-871 / DC3000).